We begin with the raw amino-acid sequence, 324 residues long: Rho crystallin (324 aa).

Thr2 bears the N-acetylthreonine mark. Position 218 to 281 (218 to 281 (SVLGSHRDRN…SFTPARIKQN (64 aa))) interacts with NADP(+).

The protein belongs to the aldo/keto reductase family. In terms of assembly, monomer.

The chain is Rho crystallin from Aquarana catesbeiana (American bullfrog).